A 131-amino-acid polypeptide reads, in one-letter code: MMTDPIADMLTRIRNAALARHDRTEVPASRIKAAVAEILKSEGFIADVRETEGEGPKKLTIVLKYGRDRQSAIDGVRRVSRPGRRVYVRHDRIPRVFSGLGISILSTSRGLMSDRDARRLKMGGELICEVW.

This sequence belongs to the universal ribosomal protein uS8 family. In terms of assembly, part of the 30S ribosomal subunit. Contacts proteins S5 and S12.

In terms of biological role, one of the primary rRNA binding proteins, it binds directly to 16S rRNA central domain where it helps coordinate assembly of the platform of the 30S subunit. The protein is Small ribosomal subunit protein uS8 of Sorangium cellulosum (strain So ce56) (Polyangium cellulosum (strain So ce56)).